The sequence spans 351 residues: Succinylglutamate desuccinylase (351 aa).

3 residues coordinate Zn(2+): histidine 73, glutamate 76, and histidine 168. Residue glutamate 231 is part of the active site.

It belongs to the AspA/AstE family. Succinylglutamate desuccinylase subfamily. The cofactor is Zn(2+).

The catalysed reaction is N-succinyl-L-glutamate + H2O = L-glutamate + succinate. It functions in the pathway amino-acid degradation; L-arginine degradation via AST pathway; L-glutamate and succinate from L-arginine: step 5/5. Transforms N(2)-succinylglutamate into succinate and glutamate. This is Succinylglutamate desuccinylase from Burkholderia lata (strain ATCC 17760 / DSM 23089 / LMG 22485 / NCIMB 9086 / R18194 / 383).